A 293-amino-acid polypeptide reads, in one-letter code: Formamidopyrimidine-DNA glycosylase (293 aa).

P2 serves as the catalytic Schiff-base intermediate with DNA. E3 serves as the catalytic Proton donor. K60 serves as the catalytic Proton donor; for beta-elimination activity. 3 residues coordinate DNA: H110, R129, and K174. Residues 259 to 293 (NVYRRTGKKCHACKNLIERQKISGRSTHWCRKCQK) form an FPG-type zinc finger. R283 (proton donor; for delta-elimination activity) is an active-site residue.

Belongs to the FPG family. As to quaternary structure, monomer. The cofactor is Zn(2+).

The catalysed reaction is Hydrolysis of DNA containing ring-opened 7-methylguanine residues, releasing 2,6-diamino-4-hydroxy-5-(N-methyl)formamidopyrimidine.. The enzyme catalyses 2'-deoxyribonucleotide-(2'-deoxyribose 5'-phosphate)-2'-deoxyribonucleotide-DNA = a 3'-end 2'-deoxyribonucleotide-(2,3-dehydro-2,3-deoxyribose 5'-phosphate)-DNA + a 5'-end 5'-phospho-2'-deoxyribonucleoside-DNA + H(+). In terms of biological role, involved in base excision repair of DNA damaged by oxidation or by mutagenic agents. Acts as a DNA glycosylase that recognizes and removes damaged bases. Has a preference for oxidized purines, such as 7,8-dihydro-8-oxoguanine (8-oxoG). Has AP (apurinic/apyrimidinic) lyase activity and introduces nicks in the DNA strand. Cleaves the DNA backbone by beta-delta elimination to generate a single-strand break at the site of the removed base with both 3'- and 5'-phosphates. This is Formamidopyrimidine-DNA glycosylase from Prochlorococcus marinus (strain MIT 9515).